Consider the following 871-residue polypeptide: DNA mismatch repair protein MutS (871 aa).

Position 630–637 (630–637) interacts with ATP; sequence GPNMGGKS. The disordered stretch occupies residues 830–849; sequence KEEPESKSASPVEAALAGIN.

Belongs to the DNA mismatch repair MutS family.

Functionally, this protein is involved in the repair of mismatches in DNA. It is possible that it carries out the mismatch recognition step. This protein has a weak ATPase activity. This chain is DNA mismatch repair protein MutS, found in Verminephrobacter eiseniae (strain EF01-2).